The sequence spans 148 residues: Small ribosomal subunit protein uS12 (148 aa).

The protein belongs to the universal ribosomal protein uS12 family. In terms of assembly, part of the 30S ribosomal subunit.

Functionally, with S4 and S5 plays an important role in translational accuracy. Located at the interface of the 30S and 50S subunits. The protein is Small ribosomal subunit protein uS12 of Methanocaldococcus jannaschii (strain ATCC 43067 / DSM 2661 / JAL-1 / JCM 10045 / NBRC 100440) (Methanococcus jannaschii).